A 306-amino-acid polypeptide reads, in one-letter code: MTRHFLRDDDLSPTEQADILALAADLKKAPFSRRPLAGPRGVAVIFDKNSTRTRFSFDIGIAQLGGHAVVVDGLSTQLGRDETLQDTARVLSGYVDAIVWRTFGQHRLDAMAATATVPVVNALSDEFHPCQVLADLQTIAERKGSLNGLRLSYFGDGANNMAHSLMLGAVTAGVHVTVATPVGFTPDPSVLAAAKKRAEATGASVTVTVDADTAAAGADVLVTDTWTSMGQENDGLDRVKPFWPFQVNARLVGLADSEAIVLHCLPAHRGDEITNEVMDGPTSAIWDEAENRLHAQKALLVWLLER.

Carbamoyl phosphate is bound by residues 50–53 (STRT), Q77, R101, and 128–131 (HPCQ). L-ornithine contacts are provided by residues N160, D224, and 228-229 (SM). Carbamoyl phosphate is bound by residues 264–265 (CL) and R292.

The protein belongs to the aspartate/ornithine carbamoyltransferase superfamily. OTCase family.

It is found in the cytoplasm. The enzyme catalyses carbamoyl phosphate + L-ornithine = L-citrulline + phosphate + H(+). It functions in the pathway amino-acid biosynthesis; L-arginine biosynthesis; L-arginine from L-ornithine and carbamoyl phosphate: step 1/3. Functionally, reversibly catalyzes the transfer of the carbamoyl group from carbamoyl phosphate (CP) to the N(epsilon) atom of ornithine (ORN) to produce L-citrulline. This Mycobacterium leprae (strain TN) protein is Ornithine carbamoyltransferase.